The following is a 973-amino-acid chain: Nuclear factor NF-kappa-B p105 subunit (973 aa).

Residues 38 to 245 form the RHD domain; the sequence is ADGPYLQILE…DAIYDSKAPN (208 aa). Residue Cys-60 is modified to S-nitrosocysteine; alternate. A lipid anchor (S-(15-deoxy-Delta12,14-prostaglandin J2-9-yl)cysteine; alternate) is attached at Cys-60. A Glycyl lysine isopeptide (Lys-Gly) (interchain with G-Cter in SUMO2) cross-link involves residue Lys-324. Position 336 is a phosphoserine (Ser-336). The Nuclear localization signal signature appears at 359-364; the sequence is QRKRQK. The GRR stretch occupies residues 371 to 394; that stretch reads DSFGGGSGAGAGGGGMFGSGGGGG. Residues 434-467 are disordered; it reads TINTKFKNEPRDCAKSDDREILNPPEKETQGEGP. Positions 435 to 973 are interaction with CFLAR; the sequence is INTKFKNEPR…GQDGPIEGKI (539 aa). A compositionally biased stretch (basic and acidic residues) spans 439–463; the sequence is FKNEPRDCAKSDDREILNPPEKETQ. N6-acetyllysine is present on Lys-440. A Phosphoserine modification is found at Ser-449. ANK repeat units lie at residues 540 to 570, 579 to 608, 612 to 641, 648 to 677, 682 to 711, and 716 to 745; these read NGDSVLHLAIIHLHAQLVRDLLEVTSGSISD, LYQTPLHLAVITKQEDVVEDLLRVGADLSL, WGNSVLHLAAKEGHDKILGVLLKNSKAALL, EGLNAIHIAVMSNSLSCLQLLVAAGAEVNA, SGRTALHLAVEYDNISLAGCLLLEGDALVD, and DGTTPLHIAAGRGSTRLAALLKAAGADPLV. Residues 648-682 are essential for interaction with HIF1AN; it reads EGLNAIHIAVMSNSLSCLQLLVAAGAEVNAQEQKS. Asn-676 is subject to (3S)-3-hydroxyasparagine; by HIF1AN. Ser-757 bears the Phosphoserine mark. The stretch at 769-799 is one ANK 7 repeat; the sequence is PGTTPLDMAANWQVFDILNGKPYEPVFTSDD. In terms of domain architecture, Death spans 803 to 890; that stretch reads QGDIKQLTED…EAIEVIQAAF (88 aa). Ser-898 carries the phosphoserine modification. Ser-912 is modified (phosphoserine; by GSK3-beta; in vitro). Position 928 is a phosphoserine (Ser-928). A phosphoserine; by IKKB mark is found at Ser-932 and Ser-937. Position 942 is a phosphoserine (Ser-942). Thr-948 is subject to Phosphothreonine.

Component of the NF-kappa-B p65-p50 complex. Homodimer; component of the NF-kappa-B p50-p50 complex. Component of the NF-kappa-B p105-p50 complex. Component of the NF-kappa-B p50-c-Rel complex. Component of a complex consisting of the NF-kappa-B p50-p50 homodimer and BCL3. Also interacts with MAP3K8. NF-kappa-B p50 subunit interacts with NCOA3 coactivator, which may coactivate NF-kappa-B dependent expression via its histone acetyltransferase activity. Interacts with TSC22D3; this interaction prevents nuclear translocation and DNA-binding. Interacts with SPAG9 and UNC5CL. NFKB1/p105 interacts with CFLAR; the interaction inhibits p105 processing into p50. NFKB1/p105 forms a ternary complex with MAP3K8 and TNIP2. Interacts with GSK3B; the interaction prevents processing of p105 to p50. NFKB1/p50 interacts with NFKBIE. NFKB1/p50 interacts with NFKBIZ. Nuclear factor NF-kappa-B p50 subunit interacts with NFKBID. Directly interacts with MEN1. Interacts with HIF1AN. Interacts with FEM1A; interaction is direct. Post-translationally, generation of the NF-kappa-B p50 (Nuclear factor NF-kappa-B p50 subunit) transcription factor takes place both cotranslationally and post-translationally via non-mutually exclusive mechanisms. A cotranslational processing allows the production of both p50 and p105 (Nuclear factor NF-kappa-B p105 subunit) from a single NFKB1 mRNA. While translation occurs, the particular unfolded structure after the GRR repeat region acts as a substrate for the proteasome, promoting degradation of the C-terminus. The GRR acts as a proteasomal 'stop signal', protecting the region upstream of the GRR from degradation and promoting generation of p50. It is unclear if limited proteasome degradation during cotranslational processing depends on ubiquitination. NF-kappa-B p50 is also generated post-translationally following ubiquitination by the KPC complex, leading to limited processing by the proteasome downstream of the GRR region, thereby generating p50. Phosphorylation at the C-terminus by IKBKB/IKKB acts as a signal for ubiquitination and promotes either complete degradation or processing to generate the NF-kappa-B p50 (Nuclear factor NF-kappa-B p50 subunit). Phosphorylation at Ser-912 primes p105 for proteolytic processing in response to TNF-alpha stimulation. Phosphorylation at Ser-928, Ser-932 and Ser-937 are required for BTRC/BTRCP-mediated ubiquitination and proteolysis. Phosphorylation at Ser-932 is also required for ubiquitination by the KPC complex and limited processing to generate NF-kappa-B p50 (Nuclear factor NF-kappa-B p50 subunit). In terms of processing, polyubiquitinated at multiple Lys residues in the C-terminus. Polyubiquitinated by the SCF(FBXW11) and SCF(BTRC) complexes following phosphorylation at Ser-928, Ser-932 and Ser-937, leading to its complete degradation. In contrast, polyubiquitination by the KPC complex following phosphorylation at Ser-932 leads to limited proteosomal processing and generation of the active NF-kappa-B p50 (Nuclear factor NF-kappa-B p50 subunit). Post-translationally, S-nitrosylation of Cys-60 affects DNA binding. The covalent modification of cysteine by 15-deoxy-Delta12,14-prostaglandin-J2 is autocatalytic and reversible. It may occur as an alternative to other cysteine modifications, such as S-nitrosylation and S-palmitoylation.

The protein localises to the cytoplasm. The protein resides in the nucleus. Functionally, NF-kappa-B is a pleiotropic transcription factor present in almost all cell types and is the endpoint of a series of signal transduction events that are initiated by a vast array of stimuli related to many biological processes such as inflammation, immunity, differentiation, cell growth, tumorigenesis and apoptosis. NF-kappa-B is a homo- or heterodimeric complex formed by the Rel-like domain-containing proteins RELA/p65, RELB, NFKB1/p105, NFKB1/p50, REL and NFKB2/p52 and the heterodimeric p65-p50 complex appears to be most abundant one. The dimers bind at kappa-B sites in the DNA of their target genes and the individual dimers have distinct preferences for different kappa-B sites that they can bind with distinguishable affinity and specificity. Different dimer combinations act as transcriptional activators or repressors, respectively. NF-kappa-B is controlled by various mechanisms of post-translational modification and subcellular compartmentalization as well as by interactions with other cofactors or corepressors. NF-kappa-B complexes are held in the cytoplasm in an inactive state complexed with members of the NF-kappa-B inhibitor (I-kappa-B) family. In a conventional activation pathway, I-kappa-B is phosphorylated by I-kappa-B kinases (IKKs) in response to different activators, subsequently degraded thus liberating the active NF-kappa-B complex which translocates to the nucleus. NF-kappa-B heterodimeric p65-p50 and RelB-p50 complexes are transcriptional activators. The NF-kappa-B p50-p50 homodimer is a transcriptional repressor, but can act as a transcriptional activator when associated with BCL3. NFKB1 appears to have dual functions such as cytoplasmic retention of attached NF-kappa-B proteins by p105 and generation of p50 by a cotranslational processing. The proteasome-mediated process ensures the production of both p50 and p105 and preserves their independent function, although processing of NFKB1/p105 also appears to occur post-translationally. p50 binds to the kappa-B consensus sequence 5'-GGRNNYYCC-3', located in the enhancer region of genes involved in immune response and acute phase reactions. In a complex with MAP3K8, NFKB1/p105 represses MAP3K8-induced MAPK signaling; active MAP3K8 is released by proteasome-dependent degradation of NFKB1/p105. P105 is the precursor of the active p50 subunit (Nuclear factor NF-kappa-B p50 subunit) of the nuclear factor NF-kappa-B. Acts as a cytoplasmic retention of attached NF-kappa-B proteins by p105. In terms of biological role, constitutes the active form, which associates with RELA/p65 to form the NF-kappa-B p65-p50 complex to form a transcription factor. Together with RELA/p65, binds to the kappa-B consensus sequence 5'-GGRNNYYCC-3', located in the enhancer region of genes involved in immune response and acute phase reactions. This Rattus norvegicus (Rat) protein is Nuclear factor NF-kappa-B p105 subunit (Nfkb1).